Reading from the N-terminus, the 172-residue chain is MSRQHAYSREELLATARGELFSHSNARLPNDPMLMFDRITGIYADGGSHGKGIVNAELDIRPDLWFFGCHFLGDPVMPGCLGLDAMWQLTGFFLTWSGATPGYGRALGCGEVKFTGQVLPNAKLVRYEVEMTKIINRTLVIGQANARMLVDNREIYFAKDLRVGMFNNTESF.

His70 is an active-site residue.

Belongs to the thioester dehydratase family. FabA subfamily. As to quaternary structure, homodimer.

It is found in the cytoplasm. The catalysed reaction is a (3R)-hydroxyacyl-[ACP] = a (2E)-enoyl-[ACP] + H2O. It carries out the reaction (3R)-hydroxydecanoyl-[ACP] = (2E)-decenoyl-[ACP] + H2O. It catalyses the reaction (2E)-decenoyl-[ACP] = (3Z)-decenoyl-[ACP]. It participates in lipid metabolism; fatty acid biosynthesis. Necessary for the introduction of cis unsaturation into fatty acids. Catalyzes the dehydration of (3R)-3-hydroxydecanoyl-ACP to E-(2)-decenoyl-ACP and then its isomerization to Z-(3)-decenoyl-ACP. Can catalyze the dehydratase reaction for beta-hydroxyacyl-ACPs with saturated chain lengths up to 16:0, being most active on intermediate chain length. The protein is 3-hydroxydecanoyl-[acyl-carrier-protein] dehydratase of Xylella fastidiosa (strain M12).